We begin with the raw amino-acid sequence, 495 residues long: Putative aldehyde dehydrogenase AldA (495 aa).

Residue 212-218 participates in NAD(+) binding; it reads GKGSESG. Residues Glu256 and Cys290 contribute to the active site.

This sequence belongs to the aldehyde dehydrogenase family.

It carries out the reaction an aldehyde + NAD(+) + H2O = a carboxylate + NADH + 2 H(+). The sequence is that of Putative aldehyde dehydrogenase AldA (aldA) from Staphylococcus aureus (strain Mu50 / ATCC 700699).